Reading from the N-terminus, the 240-residue chain is UDP-2,3-diacylglucosamine hydrolase (240 aa).

Mn(2+) contacts are provided by aspartate 8, histidine 10, aspartate 41, asparagine 79, and histidine 114. 79–80 (NR) provides a ligand contact to substrate. Aspartate 122, serine 160, asparagine 164, lysine 167, and histidine 195 together coordinate substrate. Mn(2+) contacts are provided by histidine 195 and histidine 197.

This sequence belongs to the LpxH family. Mn(2+) serves as cofactor.

The protein resides in the cell inner membrane. It catalyses the reaction UDP-2-N,3-O-bis[(3R)-3-hydroxytetradecanoyl]-alpha-D-glucosamine + H2O = 2-N,3-O-bis[(3R)-3-hydroxytetradecanoyl]-alpha-D-glucosaminyl 1-phosphate + UMP + 2 H(+). It functions in the pathway glycolipid biosynthesis; lipid IV(A) biosynthesis; lipid IV(A) from (3R)-3-hydroxytetradecanoyl-[acyl-carrier-protein] and UDP-N-acetyl-alpha-D-glucosamine: step 4/6. Functionally, hydrolyzes the pyrophosphate bond of UDP-2,3-diacylglucosamine to yield 2,3-diacylglucosamine 1-phosphate (lipid X) and UMP by catalyzing the attack of water at the alpha-P atom. Involved in the biosynthesis of lipid A, a phosphorylated glycolipid that anchors the lipopolysaccharide to the outer membrane of the cell. The protein is UDP-2,3-diacylglucosamine hydrolase of Salmonella dublin (strain CT_02021853).